A 521-amino-acid polypeptide reads, in one-letter code: Probable feruloyl esterase B-2 (521 aa).

An N-terminal signal peptide occupies residues 1 to 19 (MKVSLWLTLLGVNLSLALA). 5 N-linked (GlcNAc...) asparagine glycosylation sites follow: N13, N53, N85, N98, and N138. Disulfide bonds link C28-C75 and C63-C114. Disulfide bonds link C187-C440, C257-C274, C283-C291, and C506-C520. The active-site Acyl-ester intermediate is the S188. N235 carries an N-linked (GlcNAc...) asparagine glycan. Residues D258, D261, V263, D265, and I267 each coordinate Ca(2+). The active-site Charge relay system is the D399. N419 is a glycosylation site (N-linked (GlcNAc...) asparagine). H439 acts as the Charge relay system in catalysis.

It belongs to the tannase family.

It is found in the secreted. The catalysed reaction is feruloyl-polysaccharide + H2O = ferulate + polysaccharide.. Functionally, involved in degradation of plant cell walls. Hydrolyzes the feruloyl-arabinose ester bond in arabinoxylans as well as the feruloyl-galactose and feruloyl-arabinose ester bonds in pectin. The chain is Probable feruloyl esterase B-2 (faeB-2) from Aspergillus flavus (strain ATCC 200026 / FGSC A1120 / IAM 13836 / NRRL 3357 / JCM 12722 / SRRC 167).